The sequence spans 461 residues: MKTYDLIVIGTGPGGYPAAIRGAQLGLKVLAVEAAEVGGVCLNVGCIPTKALLHAAETVHHLKGAEGFGLKAKPELDLKKLGAWRDGVVKKLTGGVAGLLKGNKVELLRGFARFKGPREIEVNGETYGAQSFIIATGSEPMPLKGFPFGEDVWDSTRALRVEEGIPKRLLVIGGGAVGLELGQIYHRLGSEVTLIEYMPEILPAGDRETAALLRKALEKEGLKVRTGTKAVGYEKKQDGLHVLLEAAQGGSQEEIVVDKILVAVGRRPRTEGLGLEKAGVKVDERGFIQVNARMETSAPGVYAIGDVARPPLLAHKAMKEGLVAAENAAGKNALFDFQVPSVVYTGPEWAGVGLTEEEARKAGYNVKVGKFPFSASGRALTLGGAEGLIKVVGDAETDLLLGVFVVGPQAGELIAEATLALEMGATVSDLGLTIHPHPTLSEGLMEAAEALHKQAIHILNR.

Residues 33-41, lysine 50, and alanine 112 contribute to the FAD site; that span reads EAAEVGGVC. Cysteine 41 and cysteine 46 are disulfide-bonded. Residues 173–177, glutamate 196, and 263–266 each bind NAD(+); these read GGGAV and AVGR. FAD-binding residues include aspartate 306 and alanine 314. Histidine 437 acts as the Proton acceptor in catalysis.

This sequence belongs to the class-I pyridine nucleotide-disulfide oxidoreductase family. Homodimer. The cofactor is FAD.

The protein resides in the membrane. The catalysed reaction is N(6)-[(R)-dihydrolipoyl]-L-lysyl-[protein] + NAD(+) = N(6)-[(R)-lipoyl]-L-lysyl-[protein] + NADH + H(+). Has chromate reductase activity. This chain is Dihydrolipoyl dehydrogenase, found in Thermus scotoductus (strain ATCC 700910 / SA-01).